We begin with the raw amino-acid sequence, 369 residues long: Cytokine receptor common subunit gamma (369 aa).

The first 22 residues, 1–22, serve as a signal peptide directing secretion; it reads MLKLLLSPRSFLVLQLLLLRAG. Over 23–263 the chain is Extracellular; the sequence is WSSKVLMSSA…ENPSLFALEA (241 aa). C62 and C72 are oxidised to a cystine. N-linked (GlcNAc...) asparagine glycosylation is found at N71, N75, N84, and N96. Cysteines 102 and 115 form a disulfide. Positions 156-254 constitute a Fibronectin type-III domain; the sequence is APENLTLSNL…VHWGSHTVEE (99 aa). Residues N159 and N164 are each glycosylated (N-linked (GlcNAc...) asparagine). The WSXWS motif motif lies at 238–242; the sequence is WSKWS. A helical transmembrane segment spans residues 264-284; it reads VLIPVGTMGLIITLIFVYCWL. Over 285-369 the chain is Cytoplasmic; it reads ERMPPIPPIK…PPCYSLKPEA (85 aa). A Box 1 motif motif is present at residues 286 to 294; it reads RMPPIPPIK.

It belongs to the type I cytokine receptor family. Type 5 subfamily. The gamma subunit is common to the IL2, IL4, IL7, IL15, IL21 and probably also the IL13 receptors. Interacts with SHB upon interleukin stimulation. Interacts with IL9.

It localises to the cell membrane. Its subcellular location is the cell surface. Its function is as follows. Common subunit for the receptors for a variety of interleukins. Probably in association with IL15RA, involved in the stimulation of neutrophil phagocytosis by IL15. In Mus musculus (Mouse), this protein is Cytokine receptor common subunit gamma (Il2rg).